Reading from the N-terminus, the 266-residue chain is Protein crossbronx-like (266 aa).

One can recognise a UBC core domain in the interval 15-178 (KQGYHILAEY…VQEQAILSRN (164 aa)). The disordered stretch occupies residues 226 to 266 (SEYLGHIDSSRQMDEEETNQLEKLHRGRIPEPQREEAEVSL). A compositionally biased stretch (basic and acidic residues) spans 245–266 (QLEKLHRGRIPEPQREEAEVSL).

The protein belongs to the ubiquitin-conjugating enzyme family. FTS subfamily.

The protein is Protein crossbronx-like of Drosophila sechellia (Fruit fly).